Reading from the N-terminus, the 80-residue chain is Putative membrane protein insertion efficiency factor (80 aa).

Residues 61-80 (KTGKDPVPDHFSLKRNQEGE) form a disordered region. A compositionally biased stretch (basic and acidic residues) spans 62–80 (TGKDPVPDHFSLKRNQEGE).

Belongs to the UPF0161 family.

The protein localises to the cell membrane. Functionally, could be involved in insertion of integral membrane proteins into the membrane. The protein is Putative membrane protein insertion efficiency factor of Streptococcus pneumoniae (strain 70585).